The sequence spans 394 residues: Phosphoglycerate kinase (394 aa).

Substrate is bound by residues 21 to 23 (DFN), arginine 36, 59 to 62 (HMGR), arginine 118, and arginine 151. ATP contacts are provided by residues lysine 202, glutamate 324, and 350 to 353 (GGDS).

This sequence belongs to the phosphoglycerate kinase family. In terms of assembly, monomer.

The protein resides in the cytoplasm. It carries out the reaction (2R)-3-phosphoglycerate + ATP = (2R)-3-phospho-glyceroyl phosphate + ADP. The protein operates within carbohydrate degradation; glycolysis; pyruvate from D-glyceraldehyde 3-phosphate: step 2/5. This chain is Phosphoglycerate kinase, found in Exiguobacterium sibiricum (strain DSM 17290 / CCUG 55495 / CIP 109462 / JCM 13490 / 255-15).